The following is a 404-amino-acid chain: MPYNCCLPAMSCRTSCSSRPCVPPSCHGCTLPGACNIPANVGNCNWFCEGSFNGNEKETMQFLNDRLASYMEKVRQLERENAELECRIQERNQQQDPLVCPAYQAYFRTIEELQQKILCGKSENARLVVQIDNAKLASDDFRTKYETELSLRQLVEADINSLRRILDELTLCKSDLEAQVESLKEELLCLKQNHEQEVNTLRCQLGDRLNVEVDAAPTVDLNRVLNETRCQYEALVETNRREVEEWYTTQTEELNKQVVSSSEQLQSCQAEIIELRRTVNALEIELQAQHELRNSLENTLTESEARYSSQLSQVQCLITNVESQLGEIRADLERQNQEYQVLLDIRSRLECEINTYRGLLESEDCKLPCNPCATTNACDKPIGPCVPNPCVTRPRCGPCNTFVR.

Residues 1-56 (MPYNCCLPAMSCRTSCSSRPCVPPSCHGCTLPGACNIPANVGNCNWFCEGSFNGNE) are head. Residues 56–367 (EKETMQFLND…GLLESEDCKL (312 aa)) enclose the IF rod domain. The tract at residues 57 to 91 (KETMQFLNDRLASYMEKVRQLERENAELECRIQER) is coil 1A. The tract at residues 92-102 (NQQQDPLVCPA) is linker 1. The interval 103 to 203 (YQAYFRTIEE…HEQEVNTLRC (101 aa)) is coil 1B. The segment at 204 to 219 (QLGDRLNVEVDAAPTV) is linker 12. A coil 2 region spans residues 220–363 (DLNRVLNETR…NTYRGLLESE (144 aa)). The tail stretch occupies residues 364-404 (DCKLPCNPCATTNACDKPIGPCVPNPCVTRPRCGPCNTFVR).

It belongs to the intermediate filament family.

The protein is Keratin, type I cuticular Ha3-I of Mus musculus (Mouse).